We begin with the raw amino-acid sequence, 303 residues long: Y-box-binding protein 1 (303 aa).

A compositionally biased stretch (polar residues) spans 1–12 (MSSEVETQQQQP). The segment at 1 to 28 (MSSEVETQQQQPDALEGKAGQEPAATVG) is disordered. The 65-residue stretch at 39–103 (GTVKWFNVRN…GEKGAEAANV (65 aa)) folds into the CSD domain. The segment at 43–48 (WFNVRN) is C5-methylcytosine binding. A disordered region spans residues 98–303 (AEAANVTGPE…TPEAEQGGAE (206 aa)). Positions 122–132 (HYRRYPRRRGP) are enriched in basic residues. Low complexity-rich tracts occupy residues 133 to 143 (PRNYQQNYQNN) and 173 to 187 (PPYY…RPQY). Basic residues-rich tracts occupy residues 220–229 (FRPRFRRGPP) and 258–270 (RRYR…RRRR). Basic and acidic residues predominate over residues 271–284 (PENPKSQDGKETKA).

The protein belongs to the YBX1 family.

The protein resides in the cytoplasm. Its subcellular location is the nucleus. It is found in the cytoplasmic granule. The protein localises to the secreted. It localises to the extracellular exosome. The protein resides in the P-body. Functionally, DNA- and RNA-binding protein involved in various processes, such as translational repression, RNA stabilization, mRNA splicing and transcription regulation. Binds preferentially to the 5'-[CU]CUGCG-3' RNA motif and specifically recognizes mRNA transcripts modified by C5-methylcytosine (m5C). Promotes mRNA stabilization: acts by binding to m5C-containing mRNAs and preventing mRNA decay. Plays a role in the maternal-to-zygotic transition in early embryo by binding to m5C-containing maternal mRNAs and preventing their degradation. Also promotes maternal-to-zygotic transition in oocytes and embryos by promoting translation repression; molecular mechanisms governing translation repression are unknown. Plays a key role in RNA composition of extracellular exosomes by defining the sorting of small non-coding RNAs, such as tRNAs, Y RNAs, Vault RNAs and miRNAs. Probably sorts RNAs in exosomes by recognizing and binding C5-methylcytosine (m5C)-containing RNAs. Acts as a key effector of epidermal progenitors by preventing epidermal progenitor senescence: acts by regulating the translation of a senescence-associated subset of cytokine mRNAs, possibly by binding to m5C-containing mRNAs. Also involved in pre-mRNA alternative splicing regulation: binds to splice sites in pre-mRNA and regulates splice site selection. Also able to bind DNA and regulate transcription. Binds to promoters that contain a Y-box (5'-CTGATTGGCCAA-3'). Promotes separation of DNA strands that contain mismatches or are modified by cisplatin. Has endonucleolytic activity and can introduce nicks or breaks into double-stranded DNA, suggesting a role in DNA repair. The secreted form acts as an extracellular mitogen and stimulates cell migration and proliferation. The polypeptide is Y-box-binding protein 1 (Xenopus laevis (African clawed frog)).